Here is an 82-residue protein sequence, read N- to C-terminus: Beta-defensin 113 (82 aa).

Positions 1 to 16 (MKILCIFLTFFFTVSC) are cleaved as a signal peptide. Intrachain disulfides connect cysteine 35/cysteine 61, cysteine 42/cysteine 56, and cysteine 46/cysteine 62.

Belongs to the beta-defensin family.

It is found in the secreted. In terms of biological role, has antibacterial activity. In Pan troglodytes (Chimpanzee), this protein is Beta-defensin 113 (DEFB113).